We begin with the raw amino-acid sequence, 429 residues long: Ribosomal RNA small subunit methyltransferase B (429 aa).

Residues 254–260, aspartate 277, aspartate 303, and aspartate 322 contribute to the S-adenosyl-L-methionine site; that span reads CAAPGGK. Cysteine 375 acts as the Nucleophile in catalysis.

It belongs to the class I-like SAM-binding methyltransferase superfamily. RsmB/NOP family.

The protein resides in the cytoplasm. It carries out the reaction cytidine(967) in 16S rRNA + S-adenosyl-L-methionine = 5-methylcytidine(967) in 16S rRNA + S-adenosyl-L-homocysteine + H(+). Its function is as follows. Specifically methylates the cytosine at position 967 (m5C967) of 16S rRNA. This is Ribosomal RNA small subunit methyltransferase B from Shigella boydii serotype 18 (strain CDC 3083-94 / BS512).